Consider the following 99-residue polypeptide: Large ribosomal subunit protein uL23 (99 aa).

It belongs to the universal ribosomal protein uL23 family. Part of the 50S ribosomal subunit. Contacts protein L29, and trigger factor when it is bound to the ribosome.

One of the early assembly proteins it binds 23S rRNA. One of the proteins that surrounds the polypeptide exit tunnel on the outside of the ribosome. Forms the main docking site for trigger factor binding to the ribosome. The sequence is that of Large ribosomal subunit protein uL23 from Rhodopseudomonas palustris (strain BisB18).